A 99-amino-acid chain; its full sequence is MAAVNKDPRDVIIAPVVSEKSYGLIDEGKYTFLVDPRSNKTEIKLAIESIFRVEVASVNTLNRQGKTRRTKFGLGKRKDTKRAIVTLKSGSIDIFTAVG.

It belongs to the universal ribosomal protein uL23 family. In terms of assembly, part of the 50S ribosomal subunit. Contacts protein L29, and trigger factor when it is bound to the ribosome.

One of the early assembly proteins it binds 23S rRNA. One of the proteins that surrounds the polypeptide exit tunnel on the outside of the ribosome. Forms the main docking site for trigger factor binding to the ribosome. The sequence is that of Large ribosomal subunit protein uL23 from Leifsonia xyli subsp. xyli (strain CTCB07).